The sequence spans 123 residues: Small ribosomal subunit protein uS12 (123 aa).

Aspartate 89 carries the 3-methylthioaspartic acid modification.

This sequence belongs to the universal ribosomal protein uS12 family. Part of the 30S ribosomal subunit. Contacts proteins S8 and S17. May interact with IF1 in the 30S initiation complex.

Functionally, with S4 and S5 plays an important role in translational accuracy. Interacts with and stabilizes bases of the 16S rRNA that are involved in tRNA selection in the A site and with the mRNA backbone. Located at the interface of the 30S and 50S subunits, it traverses the body of the 30S subunit contacting proteins on the other side and probably holding the rRNA structure together. The combined cluster of proteins S8, S12 and S17 appears to hold together the shoulder and platform of the 30S subunit. The chain is Small ribosomal subunit protein uS12 from Phenylobacterium zucineum (strain HLK1).